The primary structure comprises 148 residues: Ribosomal RNA large subunit methyltransferase H (148 aa).

Residues leucine 62, glycine 94, and 113 to 118 (LSLLTL) contribute to the S-adenosyl-L-methionine site.

The protein belongs to the RNA methyltransferase RlmH family. Homodimer.

The protein localises to the cytoplasm. The enzyme catalyses pseudouridine(1915) in 23S rRNA + S-adenosyl-L-methionine = N(3)-methylpseudouridine(1915) in 23S rRNA + S-adenosyl-L-homocysteine + H(+). Functionally, specifically methylates the pseudouridine at position 1915 (m3Psi1915) in 23S rRNA. The chain is Ribosomal RNA large subunit methyltransferase H from Deinococcus geothermalis (strain DSM 11300 / CIP 105573 / AG-3a).